The primary structure comprises 246 residues: Uridylate kinase (246 aa).

16–19 (KFSG) serves as a coordination point for ATP. Residue glycine 58 coordinates UMP. 2 residues coordinate ATP: glycine 59 and arginine 63. UMP contacts are provided by residues aspartate 78 and 139–146 (TGNPFFTT). Residues threonine 166, tyrosine 172, and aspartate 175 each contribute to the ATP site.

This sequence belongs to the UMP kinase family. In terms of assembly, homohexamer.

Its subcellular location is the cytoplasm. The catalysed reaction is UMP + ATP = UDP + ADP. The protein operates within pyrimidine metabolism; CTP biosynthesis via de novo pathway; UDP from UMP (UMPK route): step 1/1. Inhibited by UTP. Catalyzes the reversible phosphorylation of UMP to UDP. This is Uridylate kinase from Legionella pneumophila (strain Corby).